Consider the following 85-residue polypeptide: N.vectensis toxin 1 5 (85 aa).

The signal sequence occupies residues 1-20; sequence MASFKIVIVCLALLVAVACA. Residues 21 to 36 constitute a propeptide that is removed on maturation; the sequence is RRRDMMSDDELDFHLS. 3 disulfide bridges follow: C42-C82, C44-C72, and C65-C83.

Belongs to the sea anemone sodium channel inhibitory toxin family. Type II subfamily. Expressed in ectodermal glands and in clumps outside of the extodermal layer. Is not expressed in nematocytes. In adult female tissues, shows similar expression levels in mesenteries (gametes-producing tissue), tentacles, pharynx and physa.

It localises to the secreted. Its function is as follows. Binds to site 3 of voltage-gated sodium channels and inhibits the inactivation process. Is highly active on DmNav1/TipE (drosophila) and is only extremely weakly active on rat Nav1.4-beta-1/SCN4A-SCN1B, and on human Nav1.5-beta-1/SCN5A-beta-1. This reveals high specificity for arthropod over mammalian channels. In vivo, when released into the medium, this recombinant toxin induces impaired swimming, paralysis and death of the crustacean A.nauplii within several hours. Also causes paralysis of cherry shrimps immediately after injection at very low doses. Its effect on zebrafish (D.rerio) larvae is also rapid, since it induces tail twitching accompanied by impaired swimming after 20 minutes and complete paralysis within 45 minutes. It has also been observed to cause death of zebrafish larvae within 1 hour. In Nematostella vectensis (Starlet sea anemone), this protein is N.vectensis toxin 1 5.